A 414-amino-acid polypeptide reads, in one-letter code: Ribulose bisphosphate carboxylase large chain (414 aa).

Substrate-binding residues include Asn-102 and Thr-152. The active-site Proton acceptor is Lys-154. Lys-156 contacts substrate. The Mg(2+) site is built by Lys-180, Asp-182, and Glu-183. The residue at position 180 (Lys-180) is an N6-carboxylysine. The active-site Proton acceptor is the His-273. Substrate-binding residues include Arg-274, His-306, and Ser-358.

Belongs to the RuBisCO large chain family. Type I subfamily. Heterohexadecamer of 8 large chains and 8 small chains; disulfide-linked. The disulfide link is formed within the large subunit homodimers. Requires Mg(2+) as cofactor. Post-translationally, the disulfide bond which can form in the large chain dimeric partners within the hexadecamer appears to be associated with oxidative stress and protein turnover.

The protein resides in the plastid. Its subcellular location is the chloroplast. The catalysed reaction is 2 (2R)-3-phosphoglycerate + 2 H(+) = D-ribulose 1,5-bisphosphate + CO2 + H2O. The enzyme catalyses D-ribulose 1,5-bisphosphate + O2 = 2-phosphoglycolate + (2R)-3-phosphoglycerate + 2 H(+). RuBisCO catalyzes two reactions: the carboxylation of D-ribulose 1,5-bisphosphate, the primary event in carbon dioxide fixation, as well as the oxidative fragmentation of the pentose substrate in the photorespiration process. Both reactions occur simultaneously and in competition at the same active site. The sequence is that of Ribulose bisphosphate carboxylase large chain (rbcL) from Antrophyum reticulatum (Ox-tongue fern).